A 116-amino-acid polypeptide reads, in one-letter code: Protein Wnt-5a (116 aa).

S1 carries O-palmitoleoyl serine; by PORCN lipidation. N-linked (GlcNAc...) asparagine glycans are attached at residues N69 and N83. Cysteines 82 and 97 form a disulfide.

The protein belongs to the Wnt family. Palmitoleoylation is required for efficient binding to frizzled receptors. Depalmitoleoylation leads to Wnt signaling pathway inhibition.

It is found in the secreted. It localises to the extracellular space. Its subcellular location is the extracellular matrix. Its function is as follows. Ligand for members of the frizzled family of seven transmembrane receptors. Can activate or inhibit canonical Wnt signaling, depending on receptor context. Required during embryogenesis for extension of the primary anterior-posterior axis. This chain is Protein Wnt-5a (WNT-5A), found in Plestiodon skiltonianus (Western skink).